The chain runs to 443 residues: Xaa-Pro dipeptidase (443 aa).

Residues Asp-246, Asp-257, His-339, Glu-384, and Glu-423 each contribute to the Mn(2+) site.

The protein belongs to the peptidase M24B family. Bacterial-type prolidase subfamily. Requires Mn(2+) as cofactor.

The catalysed reaction is Xaa-L-Pro dipeptide + H2O = an L-alpha-amino acid + L-proline. Functionally, splits dipeptides with a prolyl residue in the C-terminal position. The protein is Xaa-Pro dipeptidase of Cronobacter sakazakii (strain ATCC BAA-894) (Enterobacter sakazakii).